A 380-amino-acid chain; its full sequence is Cytochrome b (380 aa).

4 helical membrane-spanning segments follow: residues Phe-34–Met-54, Trp-78–Ile-99, Trp-114–Leu-134, and Phe-179–Thr-199. Heme b-binding residues include His-84 and His-98. Heme b contacts are provided by His-183 and His-197. Residue His-202 participates in a ubiquinone binding. The next 4 helical transmembrane spans lie at Leu-227–Ser-247, Leu-289–His-309, Ile-321–Ser-341, and Phe-348–Pro-368.

This sequence belongs to the cytochrome b family. The cytochrome bc1 complex contains 11 subunits: 3 respiratory subunits (MT-CYB, CYC1 and UQCRFS1), 2 core proteins (UQCRC1 and UQCRC2) and 6 low-molecular weight proteins (UQCRH/QCR6, UQCRB/QCR7, UQCRQ/QCR8, UQCR10/QCR9, UQCR11/QCR10 and a cleavage product of UQCRFS1). This cytochrome bc1 complex then forms a dimer. It depends on heme b as a cofactor.

The protein resides in the mitochondrion inner membrane. Component of the ubiquinol-cytochrome c reductase complex (complex III or cytochrome b-c1 complex) that is part of the mitochondrial respiratory chain. The b-c1 complex mediates electron transfer from ubiquinol to cytochrome c. Contributes to the generation of a proton gradient across the mitochondrial membrane that is then used for ATP synthesis. The sequence is that of Cytochrome b (MT-CYB) from Puffinus opisthomelas (Black-vented shearwater).